The sequence spans 387 residues: Proline-rich protein 5 (387 aa).

2 interaction with RICTOR regions span residues 10-96 (MSSP…LTKG) and 189-219 (HESR…YGLY). The disordered stretch occupies residues 11 to 33 (SSPSLSDLGKREPGAAGADERGT). The span at 18–33 (LGKREPGAAGADERGT) shows a compositional bias: basic and acidic residues. The residue at position 253 (Ser253) is a Phosphoserine. Disordered stretches follow at residues 262 to 347 (NPVA…PETL) and 365 to 387 (DFGR…PSVV). Low complexity predominate over residues 310 to 321 (SSPSPHSGPCPS). Ser373 carries the post-translational modification Phosphoserine.

The protein belongs to the PROTOR family. Associated component of the mechanistic target of rapamycin complex 2 (mTORC2). Binds directly to MTOR and RICTOR within the TORC2 complex.

Functionally, associated subunit of mTORC2, which regulates cell growth and survival in response to hormonal signals. mTORC2 is activated by growth factors, but, in contrast to mTORC1, seems to be nutrient-insensitive. mTORC2 seems to function upstream of Rho GTPases to regulate the actin cytoskeleton, probably by activating one or more Rho-type guanine nucleotide exchange factors. PRR5 plays an important role in regulation of PDGFRB expression and in modulation of platelet-derived growth factor signaling. May act as a tumor suppressor in breast cancer. The chain is Proline-rich protein 5 from Rattus norvegicus (Rat).